A 396-amino-acid polypeptide reads, in one-letter code: Mannonate dehydratase (396 aa).

It belongs to the mannonate dehydratase family. Fe(2+) is required as a cofactor. Requires Mn(2+) as cofactor.

The enzyme catalyses D-mannonate = 2-dehydro-3-deoxy-D-gluconate + H2O. It participates in carbohydrate metabolism; pentose and glucuronate interconversion. Catalyzes the dehydration of D-mannonate. The chain is Mannonate dehydratase from Serratia proteamaculans (strain 568).